Consider the following 412-residue polypeptide: Multifunctional CCA protein (412 aa).

ATP is bound by residues Gly-8 and Arg-11. CTP is bound by residues Gly-8 and Arg-11. Asp-21 and Asp-23 together coordinate Mg(2+). Residues Arg-91, Arg-137, and Arg-140 each contribute to the ATP site. Residues Arg-91, Arg-137, and Arg-140 each coordinate CTP. Residues 228 to 329 (TGIHTLMTLS…VKLFDSIDAW (102 aa)) form the HD domain.

This sequence belongs to the tRNA nucleotidyltransferase/poly(A) polymerase family. Bacterial CCA-adding enzyme type 1 subfamily. Monomer. Can also form homodimers and oligomers. It depends on Mg(2+) as a cofactor. Ni(2+) serves as cofactor.

It carries out the reaction a tRNA precursor + 2 CTP + ATP = a tRNA with a 3' CCA end + 3 diphosphate. It catalyses the reaction a tRNA with a 3' CCA end + 2 CTP + ATP = a tRNA with a 3' CCACCA end + 3 diphosphate. Its function is as follows. Catalyzes the addition and repair of the essential 3'-terminal CCA sequence in tRNAs without using a nucleic acid template. Adds these three nucleotides in the order of C, C, and A to the tRNA nucleotide-73, using CTP and ATP as substrates and producing inorganic pyrophosphate. tRNA 3'-terminal CCA addition is required both for tRNA processing and repair. Also involved in tRNA surveillance by mediating tandem CCA addition to generate a CCACCA at the 3' terminus of unstable tRNAs. While stable tRNAs receive only 3'-terminal CCA, unstable tRNAs are marked with CCACCA and rapidly degraded. The sequence is that of Multifunctional CCA protein from Escherichia coli O157:H7.